The following is a 140-amino-acid chain: Large ribosomal subunit protein uL14 (140 aa).

The protein belongs to the universal ribosomal protein uL14 family. As to quaternary structure, part of the 50S ribosomal subunit. Forms a cluster with proteins L3 and L24e, part of which may contact the 16S rRNA in 2 intersubunit bridges.

Binds to 23S rRNA. Forms part of two intersubunit bridges in the 70S ribosome. The protein is Large ribosomal subunit protein uL14 of Staphylothermus marinus (strain ATCC 43588 / DSM 3639 / JCM 9404 / F1).